Here is a 360-residue protein sequence, read N- to C-terminus: NAD(P)H-quinone oxidoreductase subunit 1, chloroplastic (360 aa).

8 consecutive transmembrane segments (helical) span residues 30–50 (FLPIFSLVVGIVTGVLVLVWL), 98–118 (FSIGPSLAVISILLSYSVIPF), 127–147 (FNIGIFLWIAISSIAPIGLLM), 165–185 (AAQSISYEIPLTLCLLSISLL), 203–223 (FWGWNLWRQPIGFIIFLISSL), 253–273 (FGLFYVASYLNLLISSLFVTV), 297–317 (IFGTTIGIFITLAKTYLFLFI), and 340–360 (FLLPISLGNLLLTTSFQVFSL).

This sequence belongs to the complex I subunit 1 family. NDH is composed of at least 16 different subunits, 5 of which are encoded in the nucleus.

It localises to the plastid. The protein localises to the chloroplast thylakoid membrane. It catalyses the reaction a plastoquinone + NADH + (n+1) H(+)(in) = a plastoquinol + NAD(+) + n H(+)(out). The enzyme catalyses a plastoquinone + NADPH + (n+1) H(+)(in) = a plastoquinol + NADP(+) + n H(+)(out). In terms of biological role, NDH shuttles electrons from NAD(P)H:plastoquinone, via FMN and iron-sulfur (Fe-S) centers, to quinones in the photosynthetic chain and possibly in a chloroplast respiratory chain. The immediate electron acceptor for the enzyme in this species is believed to be plastoquinone. Couples the redox reaction to proton translocation, and thus conserves the redox energy in a proton gradient. This chain is NAD(P)H-quinone oxidoreductase subunit 1, chloroplastic, found in Aethionema cordifolium (Lebanon stonecress).